A 709-amino-acid chain; its full sequence is Polyribonucleotide nucleotidyltransferase (709 aa).

Mg(2+) is bound by residues Asp-489 and Asp-495. Residues 556–615 (PKIDMIKIDVDKIKVVIGKGGETIDKIIAETGVKIDIDEEGNVSIFSSDQAAIDRTKDII) form the KH domain. An S1 motif domain is found at 625-693 (GEVYHAKVVR…DKGRVDASMK (69 aa)).

This sequence belongs to the polyribonucleotide nucleotidyltransferase family. Requires Mg(2+) as cofactor.

Its subcellular location is the cytoplasm. The enzyme catalyses RNA(n+1) + phosphate = RNA(n) + a ribonucleoside 5'-diphosphate. Its function is as follows. Involved in mRNA degradation. Catalyzes the phosphorolysis of single-stranded polyribonucleotides processively in the 3'- to 5'-direction. This Streptococcus agalactiae serotype Ia (strain ATCC 27591 / A909 / CDC SS700) protein is Polyribonucleotide nucleotidyltransferase.